Reading from the N-terminus, the 231-residue chain is Large ribosomal subunit protein uL1 (231 aa).

This sequence belongs to the universal ribosomal protein uL1 family. Part of the 50S ribosomal subunit.

Its function is as follows. Binds directly to 23S rRNA. The L1 stalk is quite mobile in the ribosome, and is involved in E site tRNA release. In terms of biological role, protein L1 is also a translational repressor protein, it controls the translation of the L11 operon by binding to its mRNA. The protein is Large ribosomal subunit protein uL1 of Buchnera aphidicola subsp. Acyrthosiphon pisum (strain APS) (Acyrthosiphon pisum symbiotic bacterium).